Here is a 179-residue protein sequence, read N- to C-terminus: Guanosine-3',5'-bis(diphosphate) 3'-pyrophosphohydrolase MESH1 (179 aa).

One can recognise an HD domain in the interval 32–127 (YINHPLGVAR…VKLADKLYNL (96 aa)). H35, H61, and D62 together coordinate Mn(2+). Catalysis depends on nucleophile residues E65 and D66. D122 contacts Mn(2+).

It belongs to the MESH1 family. The cofactor is Mn(2+).

The catalysed reaction is guanosine 3',5'-bis(diphosphate) + H2O = GDP + diphosphate + H(+). Its function is as follows. ppGpp hydrolyzing enzyme involved in starvation response. This chain is Guanosine-3',5'-bis(diphosphate) 3'-pyrophosphohydrolase MESH1 (hddc3), found in Xenopus tropicalis (Western clawed frog).